Reading from the N-terminus, the 38-residue chain is Beta-defensin 1 (38 aa).

Intrachain disulfides connect Cys-5–Cys-34, Cys-12–Cys-27, and Cys-17–Cys-35.

The protein belongs to the beta-defensin family. Monomer. Homodimer. In terms of tissue distribution, neutrophilic granules.

It is found in the secreted. Its subcellular location is the membrane. Functionally, has bactericidal activity. Active against E.coli ML35 but not against S.aureus 502A. May act as a ligand for C-C chemokine receptor CCR6. Positively regulates the sperm motility and bactericidal activity in a CCR6-dependent manner. Binds to CCR6 and triggers Ca2+ mobilization in the sperm which is important for its motility. The sequence is that of Beta-defensin 1 (DEFB1) from Bos taurus (Bovine).